A 308-amino-acid polypeptide reads, in one-letter code: MGQKFNHGVLFYHEHSGLKDIYEGLGEVTKSLTTMCKHLSIQLSENEGDIIKYCERIKNQEYSSDVDIVFILGGDGTVNELVNGVLANDLNVPIGIIPGGTFNDFTKTLNLNPNFSKASEQLKTSHLESYDVMKVNGTYVLNFVGLGLIVQNAENVQEGRKDIFGKLSYVGSTVKTLMNPEDFDYTLTVDDKELNGNTSMLVVANGPNIGGSRIPLMDLSPQDGKLNSFIFDKQSFTILNDVFKKRDSMDWNEITNGIDHIAGKHITLSTDPVMKVDIDGEISLETPITIEVLPKALQILTFPENAEQ.

The region spanning 1–139 is the DAGKc domain; the sequence is MGQKFNHGVL…YDVMKVNGTY (139 aa). Residues Ser-44, 74–80, and Thr-101 contribute to the ATP site; that span reads GDGTVNE. Mg(2+) is bound by residues Ser-220, Asp-223, and Lys-225. The active-site Proton acceptor is Glu-281.

Belongs to the diacylglycerol/lipid kinase family. Mg(2+) is required as a cofactor.

In terms of biological role, may catalyze the ATP-dependent phosphorylation of lipids other than diacylglycerol (DAG). The sequence is that of Putative lipid kinase SH2167 from Staphylococcus haemolyticus (strain JCSC1435).